The chain runs to 712 residues: tRNA 5-methylaminomethyl-2-thiouridine biosynthesis bifunctional protein MnmC (712 aa).

Residues 1–268 (MPNMRHRVNS…RRALRHAQSD (268 aa)) form a tRNA (mnm(5)s(2)U34)-methyltransferase region. The FAD-dependent cmnm(5)s(2)U34 oxidoreductase stretch occupies residues 292 to 712 (IGGGVASTHL…MRKLIKGKAL (421 aa)).

This sequence in the N-terminal section; belongs to the methyltransferase superfamily. tRNA (mnm(5)s(2)U34)-methyltransferase family. The protein in the C-terminal section; belongs to the DAO family. FAD is required as a cofactor.

The protein localises to the cytoplasm. It catalyses the reaction 5-aminomethyl-2-thiouridine(34) in tRNA + S-adenosyl-L-methionine = 5-methylaminomethyl-2-thiouridine(34) in tRNA + S-adenosyl-L-homocysteine + H(+). Catalyzes the last two steps in the biosynthesis of 5-methylaminomethyl-2-thiouridine (mnm(5)s(2)U) at the wobble position (U34) in tRNA. Catalyzes the FAD-dependent demodification of cmnm(5)s(2)U34 to nm(5)s(2)U34, followed by the transfer of a methyl group from S-adenosyl-L-methionine to nm(5)s(2)U34, to form mnm(5)s(2)U34. The protein is tRNA 5-methylaminomethyl-2-thiouridine biosynthesis bifunctional protein MnmC of Shewanella sediminis (strain HAW-EB3).